The chain runs to 218 residues: MSSMQETIINAFNFRHATKEFDPEKKVSESDFHTILETGRLSPSSLGLEPWRFVVIENEDLKEKLKPYSWGAQKQLNTASRFVIILARKNVTADSEYVQHIIRGIKKYEESTIPAVEDKFNNFQTNFHINDNERTLLDWASKQTYIALANMMTSAALLGIDSCPMEGFDLDKVTEILAEENVVDTEHFAPSVMVAFGYRKEEPKDKVRQPAEDVIEWI.

The protein belongs to the nitroreductase family. Requires FMN as cofactor.

The sequence is that of Putative NAD(P)H nitroreductase SH0546 from Staphylococcus haemolyticus (strain JCSC1435).